The following is a 384-amino-acid chain: Galactokinase (384 aa).

34 to 37 (EHTD) is a substrate binding site. Position 123–129 (123–129 (SSGLSSS)) interacts with ATP. Mg(2+) is bound by residues Ser129 and Glu161. Asp173 (proton acceptor) is an active-site residue. Tyr222 contributes to the substrate binding site.

This sequence belongs to the GHMP kinase family. GalK subfamily.

The protein localises to the cytoplasm. The enzyme catalyses alpha-D-galactose + ATP = alpha-D-galactose 1-phosphate + ADP + H(+). The protein operates within carbohydrate metabolism; galactose metabolism. Functionally, catalyzes the transfer of the gamma-phosphate of ATP to D-galactose to form alpha-D-galactose-1-phosphate (Gal-1-P). This is Galactokinase from Haemophilus influenzae (strain PittEE).